The primary structure comprises 243 residues: Probable phosphatase CBO3379/CLC_3322 (243 aa).

Zn(2+) contacts are provided by histidine 8, histidine 10, histidine 16, histidine 41, glutamate 74, histidine 102, histidine 132, aspartate 192, and histidine 194.

Belongs to the PHP family. Requires Zn(2+) as cofactor.

This Clostridium botulinum (strain Hall / ATCC 3502 / NCTC 13319 / Type A) protein is Probable phosphatase CBO3379/CLC_3322.